Consider the following 729-residue polypeptide: Fatty acid oxidation complex subunit alpha (729 aa).

Positions 1 to 189 (MLYKGDTLYL…KIGLVDGVVK (189 aa)) are enoyl-CoA hydratase/isomerase. Aspartate 296 serves as a coordination point for substrate. A 3-hydroxyacyl-CoA dehydrogenase region spans residues 311 to 729 (ETPKQAAVLG…ARPVGDLKTA (419 aa)). NAD(+) contacts are provided by residues methionine 324, aspartate 343, 400–402 (VVE), lysine 407, and serine 429. Catalysis depends on histidine 450, which acts as the For 3-hydroxyacyl-CoA dehydrogenase activity. Asparagine 453 serves as a coordination point for NAD(+). 2 residues coordinate substrate: asparagine 500 and tyrosine 660. The segment at 708-729 (RHNEPYYPPVEPARPVGDLKTA) is disordered.

In the N-terminal section; belongs to the enoyl-CoA hydratase/isomerase family. The protein in the C-terminal section; belongs to the 3-hydroxyacyl-CoA dehydrogenase family. Heterotetramer of two alpha chains (FadB) and two beta chains (FadA).

The enzyme catalyses a (3S)-3-hydroxyacyl-CoA + NAD(+) = a 3-oxoacyl-CoA + NADH + H(+). The catalysed reaction is a (3S)-3-hydroxyacyl-CoA = a (2E)-enoyl-CoA + H2O. It catalyses the reaction a 4-saturated-(3S)-3-hydroxyacyl-CoA = a (3E)-enoyl-CoA + H2O. It carries out the reaction (3S)-3-hydroxybutanoyl-CoA = (3R)-3-hydroxybutanoyl-CoA. The enzyme catalyses a (3Z)-enoyl-CoA = a 4-saturated (2E)-enoyl-CoA. The catalysed reaction is a (3E)-enoyl-CoA = a 4-saturated (2E)-enoyl-CoA. Its pathway is lipid metabolism; fatty acid beta-oxidation. Its function is as follows. Involved in the aerobic and anaerobic degradation of long-chain fatty acids via beta-oxidation cycle. Catalyzes the formation of 3-oxoacyl-CoA from enoyl-CoA via L-3-hydroxyacyl-CoA. It can also use D-3-hydroxyacyl-CoA and cis-3-enoyl-CoA as substrate. The sequence is that of Fatty acid oxidation complex subunit alpha from Escherichia coli O8 (strain IAI1).